Here is a 558-residue protein sequence, read N- to C-terminus: NAD-dependent malic enzyme 2 (558 aa).

The active-site Proton donor is Tyr-101. Arg-154 provides a ligand contact to NAD(+). Lys-172 (proton acceptor) is an active-site residue. A divalent metal cation is bound by residues Glu-243, Asp-244, and Asp-267. Positions 267 and 411 each coordinate NAD(+).

The protein belongs to the malic enzymes family. Homotetramer. The cofactor is Mg(2+). It depends on Mn(2+) as a cofactor.

It catalyses the reaction (S)-malate + NAD(+) = pyruvate + CO2 + NADH. The enzyme catalyses oxaloacetate + H(+) = pyruvate + CO2. In Photobacterium profundum (strain SS9), this protein is NAD-dependent malic enzyme 2.